The chain runs to 345 residues: Polyprenyl transferase dpmpC (345 aa).

Transmembrane regions (helical) follow at residues 24 to 44 (PVFA…ARLA), 60 to 80 (GLCF…NDWV), 101 to 121 (VTTF…WYLL), 183 to 203 (LYVY…VIGW), 220 to 240 (CLPL…AYSY), 261 to 281 (HLHL…LLFL), 286 to 306 (SFWL…EQLI), and 319 to 339 (LHKS…VELL).

It belongs to the UbiA prenyltransferase family. It depends on Mg(2+) as a cofactor.

Its subcellular location is the membrane. It participates in secondary metabolite biosynthesis; terpenoid biosynthesis. In terms of biological role, polyprenyl transferase; part of the gene cluster that mediates the biosynthesis of diterpenoid pyrones. The first step of the pathway is the synthesis of the alpha-pyrone moiety by the polyketide synthase dpmpA via condensation of one acetyl-CoA starter unit with 3 malonyl-CoA units and 2 methylations. The alpha-pyrone is then combined with geranylgeranyl pyrophosphate (GGPP) formed by the GGPP synthase dpmpD through the action of the prenyltransferase dpmpC to yield a linear alpha-pyrone diterpenoid. Subsequent steps in the diterpenoid pyrone biosynthetic pathway involve the decalin core formation, which is initiated by the epoxidation of the C10-C11 olefin by the FAD-dependent oxidoreductase dpmpE, and is followed by a cyclization cascade catalyzed by the terpene cyclase dpmpB. The short chain dehydrogenase/reductase dpmpG then oxidizes the 8S hydroxy group to a ketone and the short chain dehydrogenase/reductase dpmpH reduces the ketone to the 8R hydroxy group to yield higginsianin B. Higginsianin B is further methylated by the methyltransferase dpmpI to produce the intermediate named FDDP B. The cytochrome P450 monooxygenase dpmpJ then oxidizes the C-26 methyl to primary alcohol, producing the final diterpenoid pyrone with a C-26 primary alcohol on the gamma-pyrone moiety named FDDP C. The protein is Polyprenyl transferase dpmpC of Macrophomina phaseolina (strain MS6) (Charcoal rot fungus).